The primary structure comprises 399 residues: Serine/threonine-protein kinase PknL (399 aa).

Residues 1 to 368 (MVEAGTRDPL…FIWARQHARR (368 aa)) lie on the Cytoplasmic side of the membrane. The Protein kinase domain maps to 19–278 (YLVQAKIASG…IAMGADLEAI (260 aa)). ATP is bound by residues 25–33 (IASGGTSTV) and lysine 48. Aspartate 142 functions as the Proton acceptor in the catalytic mechanism. Positions 312–346 (GQLGAKPVHHPTRQLTRQPGDCSEPASGSEPEHEP) are disordered. Residues 369 to 389 (MVLVWVSVVLAITGLVASAAW) form a helical membrane-spanning segment. The Extracellular segment spans residues 390-399 (TIGSNLSGLL).

Belongs to the protein kinase superfamily. Ser/Thr protein kinase family. Autophosphorylated.

It is found in the cell membrane. The enzyme catalyses L-seryl-[protein] + ATP = O-phospho-L-seryl-[protein] + ADP + H(+). The catalysed reaction is L-threonyl-[protein] + ATP = O-phospho-L-threonyl-[protein] + ADP + H(+). This chain is Serine/threonine-protein kinase PknL (pknL), found in Mycobacterium bovis (strain ATCC BAA-935 / AF2122/97).